We begin with the raw amino-acid sequence, 393 residues long: Protein Njmu-R1 (393 aa).

Residues 1–74 (MLPSLQESLD…AETPSGDDFS (74 aa)) form a disordered region. S8 and S18 each carry phosphoserine. A compositionally biased stretch (acidic residues) spans 9 to 24 (LDGDEKELESSEEGGS).

In terms of assembly, interacts with TBC1D23; this interaction may be indirect.

Its function is as follows. May have a role in spermatogenesis. The sequence is that of Protein Njmu-R1 from Mus musculus (Mouse).